Consider the following 228-residue polypeptide: 7-cyano-7-deazaguanine synthase (228 aa).

Residue 7-17 (LSGGLDSAVNL) coordinates ATP. Residues Cys192, Cys200, Cys203, and Cys206 each coordinate Zn(2+).

This sequence belongs to the QueC family. Homodimer. Requires Zn(2+) as cofactor.

The catalysed reaction is 7-carboxy-7-deazaguanine + NH4(+) + ATP = 7-cyano-7-deazaguanine + ADP + phosphate + H2O + H(+). The protein operates within purine metabolism; 7-cyano-7-deazaguanine biosynthesis. Functionally, catalyzes the ATP-dependent conversion of 7-carboxy-7-deazaguanine (CDG) to 7-cyano-7-deazaguanine (preQ(0)). This is 7-cyano-7-deazaguanine synthase from Desulforamulus reducens (strain ATCC BAA-1160 / DSM 100696 / MI-1) (Desulfotomaculum reducens).